The chain runs to 252 residues: Probable NADP-dependent dehydrogenase HI_1430 (252 aa).

7–31 lines the NADP(+) pocket; the sequence is LVTGATAGFGLAICKKLIEAGYKVI. S137 contributes to the substrate binding site. Catalysis depends on Y150, which acts as the Proton acceptor.

Belongs to the short-chain dehydrogenases/reductases (SDR) family.

The polypeptide is Probable NADP-dependent dehydrogenase HI_1430 (Haemophilus influenzae (strain ATCC 51907 / DSM 11121 / KW20 / Rd)).